A 410-amino-acid polypeptide reads, in one-letter code: Serine hydroxymethyltransferase (410 aa).

(6S)-5,6,7,8-tetrahydrofolate contacts are provided by residues Leu119 and 123–125; that span reads GHL. Residue Lys228 is modified to N6-(pyridoxal phosphate)lysine. Position 351 to 353 (351 to 353) interacts with (6S)-5,6,7,8-tetrahydrofolate; sequence SPF.

Belongs to the SHMT family. As to quaternary structure, homodimer. Pyridoxal 5'-phosphate is required as a cofactor.

It localises to the cytoplasm. It catalyses the reaction (6R)-5,10-methylene-5,6,7,8-tetrahydrofolate + glycine + H2O = (6S)-5,6,7,8-tetrahydrofolate + L-serine. The protein operates within one-carbon metabolism; tetrahydrofolate interconversion. Its pathway is amino-acid biosynthesis; glycine biosynthesis; glycine from L-serine: step 1/1. Functionally, catalyzes the reversible interconversion of serine and glycine with tetrahydrofolate (THF) serving as the one-carbon carrier. This reaction serves as the major source of one-carbon groups required for the biosynthesis of purines, thymidylate, methionine, and other important biomolecules. Also exhibits THF-independent aldolase activity toward beta-hydroxyamino acids, producing glycine and aldehydes, via a retro-aldol mechanism. The polypeptide is Serine hydroxymethyltransferase (Alkaliphilus oremlandii (strain OhILAs) (Clostridium oremlandii (strain OhILAs))).